The following is a 490-amino-acid chain: Protein LMBR1L (490 aa).

The Extracellular portion of the chain corresponds to 1–21; sequence MEAPDYEVLSVREQLFHERIR. The interval 1–59 is interaction with LGB; sequence MEAPDYEVLSVREQLFHERIRECIISTLLFATLYILCHIFLTRFKKPAEFTTVDDEDAT. An LCN1-binding region spans residues 1–76; the sequence is MEAPDYEVLS…LCTFTLAIAL (76 aa). A helical transmembrane segment spans residues 22-42; it reads ECIISTLLFATLYILCHIFLT. Over 43–66 the chain is Cytoplasmic; that stretch reads RFKKPAEFTTVDDEDATVNKIALE. Residues 67 to 87 form a helical membrane-spanning segment; it reads LCTFTLAIALGAVLLLPFSII. Residues 88–114 lie on the Extracellular side of the membrane; that stretch reads SNEVLLSLPRNYYIQWLNGSLIHGLWN. The helical transmembrane segment at 115–135 threads the bilayer; it reads LVFLFSNLSLIFLMPFAYFFT. Over 136–154 the chain is Cytoplasmic; that stretch reads ESEGFAGSRRGVLGRVYET. Residues 155-175 form a helical membrane-spanning segment; that stretch reads VVMLMLLTLLVLGMVWVASAI. Residues 176–196 are Extracellular-facing; the sequence is LDNNKASRESLYDFWEYYLPY. Residues 197–217 form a helical membrane-spanning segment; it reads LYSCISFLGVLLLLVCTPLGL. Residues 218 to 305 are Cytoplasmic-facing; sequence ARMFSVTGKL…NLGYPLAMLC (88 aa). The chain crosses the membrane as a helical span at residues 306–326; that stretch reads LLVLTGLSVLIVAIHILELLI. Over 327–350 the chain is Extracellular; the sequence is DEAAMPRGMQDASLGQVSFSRLGS. A helical membrane pass occupies residues 351-371; the sequence is FGAVIQVALIFYLMVSSVVGF. Topologically, residues 372-388 are cytoplasmic; it reads YSSPLFRSLRPRWHDTA. The chain crosses the membrane as a helical span at residues 389–409; the sequence is MTQIIGNCVCLLVLSSALPVF. The Extracellular portion of the chain corresponds to 410 to 431; sequence SRTLGLTRFDLLGDFGRFNWLG. The chain crosses the membrane as a helical span at residues 432 to 452; the sequence is NFYIVFLYNAAFAGLTTLCLV. Residues 453 to 490 are Cytoplasmic-facing; the sequence is KTFTAAVRAELIRAFGLDRLPLPVSGFPPRASRKTQHQ.

The protein belongs to the LIMR family. Dimer. Can also form higher oligomers. Interacts with LCN1; this interaction mediates the endocytosis of LCN1. Interacts with UBAC2, FAF2, VCP, AMFR, ZNRF3, CTNNB1, LRP6, GSK3A, GSK3B, FZD6, DVL2 and RNF43. Interaction with LGB and SCGB1A1 is controversial.

The protein localises to the cell membrane. It is found in the endoplasmic reticulum membrane. Plays an essential role in lymphocyte development by negatively regulating the canonical Wnt signaling pathway. In association with UBAC2 and E3 ubiquitin-protein ligase AMFR, promotes the ubiquitin-mediated degradation of CTNNB1 and Wnt receptors FZD6 and LRP6. LMBR1L stabilizes the beta-catenin destruction complex that is required for regulating CTNNB1 levels. Acts as a LCN1 receptor and can mediate its endocytosis. The protein is Protein LMBR1L (LMBR1L) of Pongo abelii (Sumatran orangutan).